A 428-amino-acid polypeptide reads, in one-letter code: Enolase (428 aa).

Gln-163 contacts (2R)-2-phosphoglycerate. The active-site Proton donor is Glu-205. Positions 242, 285, and 312 each coordinate Mg(2+). (2R)-2-phosphoglycerate is bound by residues Lys-337, Arg-366, Ser-367, and Lys-388. Lys-337 (proton acceptor) is an active-site residue.

It belongs to the enolase family. Requires Mg(2+) as cofactor.

The protein localises to the cytoplasm. It is found in the secreted. Its subcellular location is the cell surface. The catalysed reaction is (2R)-2-phosphoglycerate = phosphoenolpyruvate + H2O. It functions in the pathway carbohydrate degradation; glycolysis; pyruvate from D-glyceraldehyde 3-phosphate: step 4/5. Catalyzes the reversible conversion of 2-phosphoglycerate (2-PG) into phosphoenolpyruvate (PEP). It is essential for the degradation of carbohydrates via glycolysis. The chain is Enolase from Persephonella marina (strain DSM 14350 / EX-H1).